A 311-amino-acid chain; its full sequence is ATP synthase subunit a (311 aa).

The next 6 helical transmembrane spans lie at 62-82 (AVHVDTLGWGIFLALLLGFIF), 123-143 (IAPMGLTIFSWVFMMNLMDLI), 170-190 (DPNATLGMAFTVFALMIMFSI), 213-233 (LWYLNILLIPVNTILETVALI), 253-273 (IFILIALLFSVGLVMGFVGGV), and 276-296 (WAWAVFHILVITLQAFIFMVL).

This sequence belongs to the ATPase A chain family. In terms of assembly, F-type ATPases have 2 components, CF(1) - the catalytic core - and CF(0) - the membrane proton channel. CF(1) has five subunits: alpha(3), beta(3), gamma(1), delta(1), epsilon(1). CF(0) has three main subunits: a(1), b(2) and c(9-12). The alpha and beta chains form an alternating ring which encloses part of the gamma chain. CF(1) is attached to CF(0) by a central stalk formed by the gamma and epsilon chains, while a peripheral stalk is formed by the delta and b chains.

It localises to the cell inner membrane. In terms of biological role, key component of the proton channel; it plays a direct role in the translocation of protons across the membrane. This Saccharophagus degradans (strain 2-40 / ATCC 43961 / DSM 17024) protein is ATP synthase subunit a.